The primary structure comprises 147 residues: Hemoglobin subunit beta (147 aa).

A Globin domain is found at 3–147 (HWTAEEKQLI…VAHALARKYH (145 aa)). Heme b-binding residues include histidine 64 and histidine 93.

The protein belongs to the globin family. In terms of assembly, heterotetramer of two alpha chains and two beta chains. As to expression, red blood cells.

In terms of biological role, involved in oxygen transport from the lung to the various peripheral tissues. The sequence is that of Hemoglobin subunit beta (HBB) from Anas platyrhynchos (Mallard).